Reading from the N-terminus, the 63-residue chain is Large ribosomal subunit protein bL35 (63 aa).

The protein belongs to the bacterial ribosomal protein bL35 family.

This is Large ribosomal subunit protein bL35 from Campylobacter hominis (strain ATCC BAA-381 / DSM 21671 / CCUG 45161 / LMG 19568 / NCTC 13146 / CH001A).